We begin with the raw amino-acid sequence, 1340 residues long: Thioester-containing protein 1 allele S1 (1340 aa).

The first 21 residues, 1 to 21, serve as a signal peptide directing secretion; sequence MWQFIRSRILTVIIFIGAAHG. 5 N-linked (GlcNAc...) asparagine glycosylation sites follow: asparagine 68, asparagine 199, asparagine 242, asparagine 312, and asparagine 481. Positions 580–609 are may contain the cleavage site; the sequence is ENEFDIFHSLGLFARTLDDILFDSANEKTG. 4 N-linked (GlcNAc...) asparagine glycosylation sites follow: asparagine 637, asparagine 728, asparagine 813, and asparagine 828. Residues 859-862 constitute a cross-link (isoglutamyl cysteine thioester (Cys-Gln)); that stretch reads CGEQ. Intrachain disulfides connect cysteine 1217–cysteine 1283, cysteine 1326–cysteine 1338, and cysteine 1329–cysteine 1334.

Heterodimer of a TEP1-N chain and an TEP1-C chain non-covalently linked. Forms a complex composed of TEP1-N and TEP1-C heterodimer, LRIM1 and APL1C; the interaction stabilizes TEP1-N and TEP1-C heterodimer, prevents its binding to tissues while circulating in the hemolymph and protects the thioester bond from hydrolysis. Mature TEP1 and to a lesser extent full-length TEP1 interact with SPCLIP1; the interaction is induced by microbial infection. In the hemolymph, the full-length protein is cleaved by an unknow protease into a 75kDa N-terminal (TEP1-N) chain and an 80kDa C-terminal (TEP1-C) chain which remain non-covalently linked. The TEP1-C chain contains the thioester bond which covalently binds to the pathogen surface. Cleavage is induced by bacterial infection or aseptic wound injury. During embryonic and pupal development, the cleaved form is the predominant form. Post-translationally, N-glycosylated. As to expression, specifically expressed in hemocytes (at protein level).

It localises to the secreted. Functionally, plays an essential role in the innate immune response to bacteria and protozoa infection. After proteolytic cleavage, the protein C-terminus binds covalently through a thioester bond to the pathogen surface resulting in pathogen clearance either by melanization or lysis. Initiate the recruitment and activation of a cascade of proteases, mostly of CLIP-domain serine proteases, which leads to the proteolytic cleavage of the prophenoloxidase (PPO) into active phenoloxidase (PO), the rate-limiting enzyme in melanin biosynthesis. In response to parasite P.berghei-mediated infection, binds to and mediates killing of ookinetes, as they egress from midgut epithelial cells into the basal labyrinth, by both lysis and melanization. During bacterial infection, binds to both Gram-positive and Gram-negative bacteria but only promotes phagocytosis of Gram-negative bacteria. Promotes the accumulation of SPCLIP1 onto the surface of P.berghei ookinetes and bacterium E.coli which leads to the melanization of the pathogen. Recruits CLIPA2 to bacteria surface. In response to bacterial infection, required for periostial hemocyte aggregation, but not for the aggregation of sessile hemocytes in non-periostial regions. During the late stage of fungus B.bassiana-mediated infection, required for the initiation of hyphae melanization by binding to the surface of hyphae and recruiting prophenoloxidase PPO to them. Plays a role in male fertility by binding to defective sperm cells and promoting their removal during spermatogenesis. In terms of biological role, binds covalently through a thioester bond to the pathogen surface resulting in pathogen clearance. The chain is Thioester-containing protein 1 allele S1 from Anopheles gambiae (African malaria mosquito).